We begin with the raw amino-acid sequence, 612 residues long: Calcium-dependent protein kinase 27 (612 aa).

Residue glycine 2 is the site of N-myristoyl glycine attachment. Positions 23–132 are disordered; the sequence is PRHAAPSSPS…AHIKRISSAG (110 aa). A compositionally biased stretch (low complexity) spans 28–50; sequence PSSPSQPTTTSRSIPVVLPSAPS. Pro residues predominate over residues 51–100; the sequence is SKPPPPTQTAPPVPVVISEPPPPQPQPEPQPAAPSQPPPPQEQPSPPPPA. Positions 117–127 are enriched in basic residues; that stretch reads SRAKKPAHIKR. A Protein kinase domain is found at 150–408; sequence YSLGRKLGQG…AHEVLCHPWL (259 aa). Residues 156-164 and lysine 179 each bind ATP; that span reads LGQGQFGTT. Aspartate 274 acts as the Proton acceptor in catalysis. The segment at 414 to 444 is autoinhibitory domain; the sequence is APDKPLDSAVLSRLRQFSAMNKLKKMALRVI. 4 EF-hand domains span residues 451–486, 487–522, 523–558, and 561–592; these read EEIAGLKEMFKMMDTDNSGQINYEELKAGLERVGAN, MKESEIYQLMQAADIDNSGTIDYGEFIAATLHLNKV, EREDHLYAAFQYFDKDGSGYITSDELQQACDEFGIE, and RLEDMIGEVDQDNDGRIDYNEFVAMMQKTTTG. Ca(2+) contacts are provided by aspartate 464, aspartate 466, serine 468, glutamine 470, glutamate 475, aspartate 500, aspartate 502, serine 504, threonine 506, glutamate 511, aspartate 536, aspartate 538, serine 540, tyrosine 542, glutamate 547, aspartate 570, aspartate 572, aspartate 574, arginine 576, and glutamate 581.

Belongs to the protein kinase superfamily. Ser/Thr protein kinase family. CDPK subfamily.

It is found in the membrane. It carries out the reaction L-seryl-[protein] + ATP = O-phospho-L-seryl-[protein] + ADP + H(+). The catalysed reaction is L-threonyl-[protein] + ATP = O-phospho-L-threonyl-[protein] + ADP + H(+). With respect to regulation, activated by calcium. Autophosphorylation may play an important role in the regulation of the kinase activity. May play a role in signal transduction pathways that involve calcium as a second messenger. This chain is Calcium-dependent protein kinase 27, found in Oryza sativa subsp. japonica (Rice).